Reading from the N-terminus, the 370-residue chain is 3 beta-hydroxysteroid dehydrogenase/Delta 5--&gt;4-isomerase (370 aa).

Tyr158 serves as the catalytic Proton acceptor. Lys162 contributes to the NAD(+) binding site.

This sequence belongs to the 3-beta-HSD family. Monomer.

It localises to the cytoplasm. It catalyses the reaction a 3beta-hydroxy-Delta(5)-steroid + NAD(+) = a 3-oxo-Delta(5)-steroid + NADH + H(+). It carries out the reaction cholesterol + NAD(+) = cholest-5-en-3-one + NADH + H(+). The enzyme catalyses pregnenolone + NAD(+) = pregn-5-ene-3,20-dione + NADH + H(+). The catalysed reaction is 3beta-hydroxyandrost-5-en-17-one + NAD(+) = androst-5-ene-3,17-dione + NADH + H(+). It catalyses the reaction a 3-oxo-Delta(5)-steroid = a 3-oxo-Delta(4)-steroid. It carries out the reaction cholest-5-en-3-one = cholest-4-en-3-one. The enzyme catalyses pregn-5-ene-3,20-dione = progesterone. The catalysed reaction is androst-5-ene-3,17-dione = androst-4-ene-3,17-dione. It participates in lipid metabolism; steroid biosynthesis. Functionally, 3-beta-HSD is a bifunctional enzyme, that catalyzes the oxidation and isomerization of cholesterol, pregnenolone, and dehydroepiandrosterone (DHEA) into cholest-4-en-3-one, progesterone, and androsterone, respectively. The sequence is that of 3 beta-hydroxysteroid dehydrogenase/Delta 5--&gt;4-isomerase from Mycobacterium tuberculosis (strain CDC 1551 / Oshkosh).